Consider the following 512-residue polypeptide: Calcium-dependent protein kinase 18 (512 aa).

The disordered stretch occupies residues methionine 1–lysine 25. Glycine 2 carries N-myristoyl glycine lipidation. A Protein kinase domain is found at tyrosine 52–valine 312. Residues leucine 58 to threonine 66 and lysine 81 contribute to the ATP site. Residue aspartate 178 is the Proton acceptor of the active site. Positions alanine 318–leucine 348 are autoinhibitory domain. EF-hand domains are found at residues glutamate 355 to tryptophan 390, leucine 392 to leucine 427, lysine 434 to isoleucine 469, and leucine 472 to serine 499. Ca(2+) is bound by residues aspartate 368, aspartate 370, asparagine 372, threonine 374, glutamate 379, aspartate 405, asparagine 407, aspartate 409, glutamate 416, aspartate 447, aspartate 449, aspartate 451, tyrosine 453, glutamate 458, aspartate 477, aspartate 479, aspartate 481, lysine 483, and glutamate 488.

The protein belongs to the protein kinase superfamily. Ser/Thr protein kinase family. CDPK subfamily. Interacts with MPK5. In terms of processing, autophosphorylated. Phosphorylated by MPK5.

It localises to the cell membrane. The catalysed reaction is L-seryl-[protein] + ATP = O-phospho-L-seryl-[protein] + ADP + H(+). It carries out the reaction L-threonyl-[protein] + ATP = O-phospho-L-threonyl-[protein] + ADP + H(+). With respect to regulation, activated by calcium. Autophosphorylation may play an important role in the regulation of the kinase activity. In terms of biological role, may play a role in signal transduction pathways that involve calcium as a second messenger. Functions upstream of MPK5 in a signaling pathway that represses defense gene expression and negatively regulates resistance to rice blast fungus. Phosphorylates MPK5 at Thr-14 and Thr-32 and activates MPK5 independently of MAP kinase kinase (MKK) phosphorylation. May be involved in arbuscular mycorrhizal presymbiotic phase signaling. Phosphorylates the elicitor-responsive protein ERG1 in vitro. Phosphorylation is calcium-dependent. This Oryza sativa subsp. japonica (Rice) protein is Calcium-dependent protein kinase 18.